The sequence spans 251 residues: Protein unc-119 homolog B (251 aa).

The segment covering 1 to 13 has biased composition (polar residues); that stretch reads MSGSNPKAATAGS. The segment at 1–56 is disordered; it reads MSGSNPKAATAGSQAGPGGLVAGKEEKKKAGGGVLNRLKARRQGPPHTPDDGSGAA. The residue at position 2 (Ser-2) is an N-acetylserine. Lys-24 is modified (N6-acetyllysine). Tyr-142 is a tetradecanoate binding site.

It belongs to the PDE6D/unc-119 family. In terms of assembly, found in a complex with ARL3, RP2 and UNC119B; RP2 induces hydrolysis of GTP ARL3 in the complex, leading to the release of UNC119B. Interacts with NPHP3 (when myristoylated). Interacts with CYS1 (when myristoylated). Interacts with MACIR; interaction only takes place when UNC119B is not liganded with myristoylated proteins.

The protein localises to the cell projection. It is found in the cilium. Myristoyl-binding protein that acts as a cargo adapter: specifically binds the myristoyl moiety of a subset of N-terminally myristoylated proteins and is required for their localization. Binds myristoylated NPHP3 and plays a key role in localization of NPHP3 to the primary cilium membrane. Does not bind all myristoylated proteins. Probably plays a role in trafficking proteins in photoreceptor cells. This is Protein unc-119 homolog B (Unc119b) from Mus musculus (Mouse).